The chain runs to 550 residues: Membrane protein insertase YidC (550 aa).

A helical membrane pass occupies residues 6–26 (LIVFIVLSFGLLFVWQEYFAP). The interval 30 to 59 (PKPVAAAVQPDGTPAPATARPADSPATGKL) is disordered. 4 helical membrane passes run 360 to 380 (WGWA…PLSA), 430 to 450 (LPIV…LASV), 472 to 492 (ILPA…PPPA), and 504 to 524 (PLAF…YWLV).

This sequence belongs to the OXA1/ALB3/YidC family. Type 1 subfamily. As to quaternary structure, interacts with the Sec translocase complex via SecD. Specifically interacts with transmembrane segments of nascent integral membrane proteins during membrane integration.

The protein resides in the cell inner membrane. Required for the insertion and/or proper folding and/or complex formation of integral membrane proteins into the membrane. Involved in integration of membrane proteins that insert both dependently and independently of the Sec translocase complex, as well as at least some lipoproteins. Aids folding of multispanning membrane proteins. This Laribacter hongkongensis (strain HLHK9) protein is Membrane protein insertase YidC.